The sequence spans 496 residues: Glycerol kinase (496 aa).

T11 serves as a coordination point for ADP. ATP is bound by residues T11, S12, and S13. T11 is a binding site for sn-glycerol 3-phosphate. Residue R15 coordinates ADP. Residues R81, E82, Y133, and D242 each contribute to the sn-glycerol 3-phosphate site. R81, E82, Y133, D242, and Q243 together coordinate glycerol. ADP contacts are provided by T264 and G307. ATP is bound by residues T264, G307, Q311, and G412. Residues G412 and N416 each coordinate ADP.

Belongs to the FGGY kinase family.

The catalysed reaction is glycerol + ATP = sn-glycerol 3-phosphate + ADP + H(+). The protein operates within polyol metabolism; glycerol degradation via glycerol kinase pathway; sn-glycerol 3-phosphate from glycerol: step 1/1. With respect to regulation, inhibited by fructose 1,6-bisphosphate (FBP). Functionally, key enzyme in the regulation of glycerol uptake and metabolism. Catalyzes the phosphorylation of glycerol to yield sn-glycerol 3-phosphate. The sequence is that of Glycerol kinase from Albidiferax ferrireducens (strain ATCC BAA-621 / DSM 15236 / T118) (Rhodoferax ferrireducens).